Here is a 124-residue protein sequence, read N- to C-terminus: U33-theraphotoxin-Cg1a (124 aa).

The signal sequence occupies residues 1-17 (MKFAVAIAFTLLVCVFA). 5 disulfide bridges follow: Cys-26-Cys-37, Cys-31-Cys-51, Cys-36-Cys-75, Cys-61-Cys-83, and Cys-77-Cys-94. Over residues 93 to 108 (RCQEESGKSDKSKESQ) the composition is skewed to basic and acidic residues. The tract at residues 93 to 124 (RCQEESGKSDKSKESQGSDESEESEESKESCG) is disordered. Acidic residues predominate over residues 109 to 118 (GSDESEESEE).

Belongs to the neurotoxin 32 family. In terms of tissue distribution, expressed by the venom gland.

The protein resides in the secreted. The protein is U33-theraphotoxin-Cg1a of Chilobrachys guangxiensis (Chinese earth tiger tarantula).